The sequence spans 62 residues: Large ribosomal subunit protein bL28 (62 aa).

Belongs to the bacterial ribosomal protein bL28 family.

This is Large ribosomal subunit protein bL28 from Helicobacter pylori (strain HPAG1).